The sequence spans 258 residues: Transcription factor ORG3 (258 aa).

In terms of domain architecture, bHLH spans 76 to 128; sequence VKKLNHNASERDRRRKINSLFSSLRSCLPASGQSKKLSIPATVSRSLKYIPEL.

In terms of assembly, homodimer. In terms of tissue distribution, expressed in vascular tissues. Detected in roots.

It localises to the nucleus. The protein is Transcription factor ORG3 (ORG3) of Arabidopsis thaliana (Mouse-ear cress).